The following is a 213-amino-acid chain: MTDRRGLLIILSSPSGAGKSTLARRLMSWDPGLKFSVSATTRAPRPGEEHGREYYFLSEDQFKGQVRRGEMLEHAHVFGNFYGSPAGPVRDTIEAGQDVLFDVDWQGEIQIRNSDLGKHALSIFILPPSIKELRRRLESRGQDSAEVISRRMLKSWDEISHWGYYDYVLINDDLDATEERLKTIVSAERMRRIQQPALQEHVRKLQSEFEDLS.

A Guanylate kinase-like domain is found at 6 to 186 (GLLIILSSPS…TEERLKTIVS (181 aa)). An ATP-binding site is contributed by 13 to 20 (SPSGAGKS).

This sequence belongs to the guanylate kinase family.

Its subcellular location is the cytoplasm. It catalyses the reaction GMP + ATP = GDP + ADP. Essential for recycling GMP and indirectly, cGMP. This is Guanylate kinase from Ruegeria pomeroyi (strain ATCC 700808 / DSM 15171 / DSS-3) (Silicibacter pomeroyi).